Here is a 306-residue protein sequence, read N- to C-terminus: Bacitracin transport ATP-binding protein BcrA (306 aa).

The ABC transporter domain maps to 5-233 (IKTTDLTKMY…NRKYLEFQLS (229 aa)). 37 to 44 (GRNGAGKT) provides a ligand contact to ATP.

It belongs to the ABC transporter superfamily.

Part of the binding-protein-dependent transport system for bacitracin that confer resistance to this antibiotic. Probably responsible for energy coupling to the transport system. This is Bacitracin transport ATP-binding protein BcrA (bcrA) from Bacillus licheniformis.